A 141-amino-acid polypeptide reads, in one-letter code: Hemoglobin subunit alpha (141 aa).

The region spanning 1–141 is the Globin domain; the sequence is VLSPADKTNL…VSTVLTSKYR (141 aa). The residue at position 3 (Ser-3) is a Phosphoserine. Lys-7 is subject to N6-succinyllysine. Thr-8 is modified (phosphothreonine). N6-succinyllysine is present on Lys-11. Lys-16 carries the N6-acetyllysine; alternate modification. Lys-16 bears the N6-succinyllysine; alternate mark. Tyr-24 is subject to Phosphotyrosine. An N6-succinyllysine modification is found at Lys-40. Ser-49 carries the post-translational modification Phosphoserine. His-58 serves as a coordination point for O2. Position 87 (His-87) interacts with heme b. Residue Ser-102 is modified to Phosphoserine. Position 108 is a phosphothreonine (Thr-108). Ser-124 is subject to Phosphoserine. Phosphothreonine is present on residues Thr-134 and Thr-137. Phosphoserine is present on Ser-138.

The protein belongs to the globin family. As to quaternary structure, heterotetramer of two alpha chains and two beta chains. Red blood cells.

Functionally, involved in oxygen transport from the lung to the various peripheral tissues. In Tamias striatus (Eastern chipmunk), this protein is Hemoglobin subunit alpha.